The sequence spans 107 residues: ATPase inhibitor, mitochondrial (107 aa).

The transit peptide at 1 to 25 directs the protein to the mitochondrion; it reads MAGSALAVRARLGVWGMRVLQTRGF. The interval 25-58 is disordered; it reads FGSDSSESMDSGAGSIREAGGAFGKREKAEEDRY. Residues 26–52 form an N-terminal inhibitory region region; it reads GSDSSESMDSGAGSIREAGGAFGKREK. Position 39 is a phosphoserine (serine 39). Positions 48-58 are enriched in basic and acidic residues; the sequence is GKREKAEEDRY. Residues 60-107 adopt a coiled-coil conformation; it reads REKTREQLAALKKHHEDEIDHHSKEIERLQKQIERHKKKIKYLKNSEH. The antiparallel alpha-helical coiled coil region stretch occupies residues 74–106; that stretch reads HEDEIDHHSKEIERLQKQIERHKKKIKYLKNSE. Lysine 103 carries the post-translational modification N6-succinyllysine.

Belongs to the ATPase inhibitor family. In terms of assembly, homodimer; represents the active form and is present at a pH value below 6.5. Homotetramer; represents the inactive form and is present at a pH value above 7.0.

It is found in the mitochondrion. Its function is as follows. Endogenous F(1)F(o)-ATPase inhibitor limiting ATP depletion when the mitochondrial membrane potential falls below a threshold and the F(1)F(o)-ATP synthase starts hydrolyzing ATP to pump protons out of the mitochondrial matrix. Required to avoid the consumption of cellular ATP when the F(1)F(o)-ATP synthase enzyme acts as an ATP hydrolase. Indirectly acts as a regulator of heme synthesis in erythroid tissues: regulates heme synthesis by modulating the mitochondrial pH and redox potential, allowing FECH to efficiently catalyze the incorporation of iron into protoporphyrin IX to produce heme. This Rattus norvegicus (Rat) protein is ATPase inhibitor, mitochondrial.